The primary structure comprises 748 residues: Tyrosine--tRNA ligase 2, cytoplasmic (748 aa).

M1 is modified (N-acetylmethionine). The 'HIGH' region motif lies at 441–449 (PSGRMHIAQ). The L-tyrosine site is built by Y564, Q568, D571, and Q586. The 'KMSKS' region motif lies at 623–627 (KMSKS). K626 is a binding site for ATP.

It belongs to the class-I aminoacyl-tRNA synthetase family.

It localises to the cytoplasm. The protein localises to the cytosol. It carries out the reaction tRNA(Tyr) + L-tyrosine + ATP = L-tyrosyl-tRNA(Tyr) + AMP + diphosphate + H(+). Functionally, catalyzes the attachment of tyrosine to tRNA(Tyr) in a two-step reaction: tyrosine is first activated by ATP to form Tyr-AMP and then transferred to the acceptor end of tRNA(Tyr). The chain is Tyrosine--tRNA ligase 2, cytoplasmic from Arabidopsis thaliana (Mouse-ear cress).